A 233-amino-acid polypeptide reads, in one-letter code: Probable fimbrial chaperone protein ElfD (233 aa).

The signal sequence occupies residues 1–26 (MKTCITKGIVTVSLTAILLSCSSTWA).

The protein belongs to the periplasmic pilus chaperone family.

Its subcellular location is the periplasm. Functionally, part of the elfADCG fimbrial operon, which could be required for adherence to host epithelial cells. Could be required for the biogenesis of the ElfA fimbriae. The protein is Probable fimbrial chaperone protein ElfD (elfD) of Escherichia coli O157:H7.